The chain runs to 822 residues: Ras GTPase-activating-like protein rgaA (822 aa).

The segment at 1-36 is disordered; sequence MNKEEYSDISDSESEEVHETNNHNEHEHEEEDDTPE. Basic and acidic residues predominate over residues 15 to 27; that stretch reads EEVHETNNHNEHE. Residues 104–152 adopt a coiled-coil conformation; that stretch reads EDKESDWIAEIQELKRNLVSEVRRNHTLERDLNRLDKRIALLIKNRGNI. The required for interaction to rac1A stretch occupies residues 161–822; that stretch reads GLKAPKHKGD…IHLLNKLFLY (662 aa). The Ras-GAP domain maps to 234–477; the sequence is FLLLSLYRLS…GDIKNYLQEI (244 aa).

Heterotetramer. Quaternary complex with activated rac1A, ctxA and ctxB. Interacts directly with rac1A and ctxA. Preferentially interacts with activated forms of rac1A, rac1B and rac1C. Interacts with racE.

It localises to the cytoplasm. It is found in the cell cortex. The protein resides in the cleavage furrow. Part of signaling pathway that is required for completion of cytokinesis. gapA and rgaA control cortexillin localization to the cleavage furrow and hence may be involved in cleavage of the midbody in the final stage of cytokinesis by regulating the actin cytoskeleton. Forms a complex by linking activated rac1A to ctxA. Assembly of this complex is necessary for the recruitment of cortexillin to the midzone of a dividing cell. Overexpression leads to the suppression of the formation of cellular projections containing F-actin and to a defect in cytokinesis. This is Ras GTPase-activating-like protein rgaA (rgaA) from Dictyostelium discoideum (Social amoeba).